A 100-amino-acid polypeptide reads, in one-letter code: Urease subunit gamma 1 (100 aa).

Belongs to the urease gamma subunit family. As to quaternary structure, heterotrimer of UreA (gamma), UreB (beta) and UreC (alpha) subunits. Three heterotrimers associate to form the active enzyme.

The protein localises to the cytoplasm. It carries out the reaction urea + 2 H2O + H(+) = hydrogencarbonate + 2 NH4(+). The protein operates within nitrogen metabolism; urea degradation; CO(2) and NH(3) from urea (urease route): step 1/1. Its function is as follows. Disruption of the ure1 gene cluster suggests that it protects brucellae during their passage through the stomach. The major route of infection in human brucellosis is oral. This chain is Urease subunit gamma 1, found in Brucella abortus (strain 2308).